The following is a 238-amino-acid chain: ATP synthase subunit a (238 aa).

A run of 4 helical transmembrane segments spans residues Leu17 to Cys37, Ile80 to Ile100, Asp112 to Ile132, and Ile194 to Ile214.

It belongs to the ATPase A chain family. In terms of assembly, F-type ATPases have 2 components, CF(1) - the catalytic core - and CF(0) - the membrane proton channel. CF(1) has five subunits: alpha(3), beta(3), gamma(1), delta(1), epsilon(1). CF(0) has three main subunits: a(1), b(2) and c(9-12). The alpha and beta chains form an alternating ring which encloses part of the gamma chain. CF(1) is attached to CF(0) by a central stalk formed by the gamma and epsilon chains, while a peripheral stalk is formed by the delta and b chains.

The protein resides in the cell membrane. Functionally, key component of the proton channel; it plays a direct role in the translocation of protons across the membrane. The chain is ATP synthase subunit a from Listeria innocua serovar 6a (strain ATCC BAA-680 / CLIP 11262).